The chain runs to 311 residues: Manganese-dependent inorganic pyrophosphatase (311 aa).

Mn(2+) is bound by residues His-10, Asp-14, Asp-16, Asp-75, His-97, and Asp-149.

It belongs to the PPase class C family. In terms of assembly, homodimer. Requires Mn(2+) as cofactor.

The catalysed reaction is diphosphate + H2O = 2 phosphate + H(+). The protein is Manganese-dependent inorganic pyrophosphatase (ppaC) of Methanothrix thermoacetophila (strain DSM 6194 / JCM 14653 / NBRC 101360 / PT) (Methanosaeta thermophila).